The chain runs to 352 residues: Probable tyrosine-protein kinase DDB_G0290471 (352 aa).

Residues 51 to 333 (IEYVCRLGSG…ISLNQIRSFY (283 aa)) enclose the Protein kinase domain. ATP contacts are provided by residues 57-65 (LGSGSLCRV) and Lys-78. Asp-175 acts as the Proton acceptor in catalysis.

Belongs to the protein kinase superfamily. TKL Tyr protein kinase family.

It carries out the reaction L-tyrosyl-[protein] + ATP = O-phospho-L-tyrosyl-[protein] + ADP + H(+). The polypeptide is Probable tyrosine-protein kinase DDB_G0290471 (Dictyostelium discoideum (Social amoeba)).